A 149-amino-acid chain; its full sequence is Transcription factor bHLH153 (149 aa).

The region spanning 27–76 (RHKSDLSFSSKERKDKVGERISALQQIVSPYGKTDTASVLLDAMHYIEFL) is the bHLH domain.

Belongs to the bHLH protein family.

The protein resides in the nucleus. The chain is Transcription factor bHLH153 from Arabidopsis thaliana (Mouse-ear cress).